Here is a 31-residue protein sequence, read N- to C-terminus: Cytochrome b6-f complex subunit 6 (31 aa).

A helical membrane pass occupies residues Leu4–Asn26.

This sequence belongs to the PetL family. In terms of assembly, the 4 large subunits of the cytochrome b6-f complex are cytochrome b6, subunit IV (17 kDa polypeptide, PetD), cytochrome f and the Rieske protein, while the 4 small subunits are PetG, PetL, PetM and PetN. The complex functions as a dimer.

The protein resides in the plastid. The protein localises to the chloroplast thylakoid membrane. In terms of biological role, component of the cytochrome b6-f complex, which mediates electron transfer between photosystem II (PSII) and photosystem I (PSI), cyclic electron flow around PSI, and state transitions. PetL is important for photoautotrophic growth as well as for electron transfer efficiency and stability of the cytochrome b6-f complex. The polypeptide is Cytochrome b6-f complex subunit 6 (Phalaenopsis aphrodite subsp. formosana (Moth orchid)).